The sequence spans 360 residues: Protein NDRG2 (360 aa).

The disordered stretch occupies residues 325-360 (RTASLSSEGNRSRSRTLSQSSESGGGPPAPLAEVTC).

This sequence belongs to the NDRG family.

Its subcellular location is the cytoplasm. Contributes to the regulation of the Wnt signaling pathway. Down-regulates CTNNB1-mediated transcriptional activation of target genes. May be involved in neuron differentiation. The chain is Protein NDRG2 from Xenopus tropicalis (Western clawed frog).